Consider the following 273-residue polypeptide: CUE domain-containing protein 2-A (273 aa).

Residues 92 to 121 (GKENVSPKPTAEVSFMTPTSSSTESSKKIE) form a disordered region. Positions 135–178 (DAKNGIDLLLEIFPSCTVSQAQTALSMAKGDLEDAVQIIVDGKV) constitute a CUE domain.

This sequence belongs to the CUEDC2 family. Phosphorylated.

The protein localises to the cytoplasm. Its subcellular location is the nucleus. Its function is as follows. May play a role in targeting proteins for ubiquitination and subsequent proteasomal degradation. This chain is CUE domain-containing protein 2-A (cuedc2-a), found in Xenopus laevis (African clawed frog).